We begin with the raw amino-acid sequence, 51 residues long: Photosystem I reaction center subunit IX (51 aa).

A helical membrane pass occupies residues 17–37 (FFSTAPVIALVFFTLTAGFLV).

It belongs to the PsaJ family.

The protein localises to the cellular thylakoid membrane. Functionally, may help in the organization of the PsaE and PsaF subunits. The polypeptide is Photosystem I reaction center subunit IX (Acaryochloris marina (strain MBIC 11017)).